The chain runs to 90 residues: YcgL domain-containing protein plu2139 (90 aa).

In terms of domain architecture, YcgL spans 1–85 (MICAIYSSPK…PVENLMNAHL (85 aa)).

In Photorhabdus laumondii subsp. laumondii (strain DSM 15139 / CIP 105565 / TT01) (Photorhabdus luminescens subsp. laumondii), this protein is YcgL domain-containing protein plu2139.